Here is a 321-residue protein sequence, read N- to C-terminus: MSKPIVMERGVKYRDADKMALIPVKTVVTERTEVLRKPEWMKIKLPADSSRIQGIKAAMRKNGLHSVCEEASCPNLAECFNHGTATFMILGAICTRRCPFCDVAHGRPTTPDANEPGKLAQTIADMALRYVVITSVDRDDLRDGGAQHFADCISAIREKSPTIKIETLVPDFRGRMDRALEILNATPPDVFNHNLENVPRVYRQVRPGANYDWSLKLLERFKEAHPEIPTKSGLMVGLGETNAEIVEVMRDLRRHGVTMLTLGQYLQPSRHHLPVQRYVSPAEFDEMKAAAMDMGFTHAACGPFVRSSYHADMQAKGLEVK.

7 residues coordinate [4Fe-4S] cluster: cysteine 68, cysteine 73, cysteine 79, cysteine 94, cysteine 98, cysteine 101, and serine 308. Residues 80–297 enclose the Radical SAM core domain; sequence FNHGTATFMI…KAAAMDMGFT (218 aa).

It belongs to the radical SAM superfamily. Lipoyl synthase family. [4Fe-4S] cluster is required as a cofactor.

The protein localises to the cytoplasm. The enzyme catalyses [[Fe-S] cluster scaffold protein carrying a second [4Fe-4S](2+) cluster] + N(6)-octanoyl-L-lysyl-[protein] + 2 oxidized [2Fe-2S]-[ferredoxin] + 2 S-adenosyl-L-methionine + 4 H(+) = [[Fe-S] cluster scaffold protein] + N(6)-[(R)-dihydrolipoyl]-L-lysyl-[protein] + 4 Fe(3+) + 2 hydrogen sulfide + 2 5'-deoxyadenosine + 2 L-methionine + 2 reduced [2Fe-2S]-[ferredoxin]. It functions in the pathway protein modification; protein lipoylation via endogenous pathway; protein N(6)-(lipoyl)lysine from octanoyl-[acyl-carrier-protein]: step 2/2. In terms of biological role, catalyzes the radical-mediated insertion of two sulfur atoms into the C-6 and C-8 positions of the octanoyl moiety bound to the lipoyl domains of lipoate-dependent enzymes, thereby converting the octanoylated domains into lipoylated derivatives. This is Lipoyl synthase from Erwinia tasmaniensis (strain DSM 17950 / CFBP 7177 / CIP 109463 / NCPPB 4357 / Et1/99).